A 443-amino-acid polypeptide reads, in one-letter code: MSHEEDLIDYSDEELQTTDAAAAAATAAAAANGAAVKKGDLTVSGARADKKGSYVGVHSTGFRDFLLKPELLRAITDCGFEHPSEVQQVCIPTAILKVDVLCQAKSGLGKTAVFVLTTLNQLEPVPGECSILVMCHTRELAYQIKNEYARFSKYLPDVKTAVFYGGTPMQKDIEVLSSKDTYPNIVVGTPGRLNALVREKKLSLRNIKAFVLDECDKMLDQIDMRRDVQEIFRSTPADKQVMMFSATLSQEIRPICKKFMRNPLEVYVDDDTKLTLHGLQQYYIKLSEAEKNRKLNELLDNLEFNQVIIFVKSTLRANELDKLLRECNFPSIAVHSGVSQEERIKRYKEFKEFNKRICVATDVFGRGIDIERINLAINYDMPADADSYLHRVGRAGRFGTKGLSISFVSSEDDMKTLKDIEKRFEVALPEYPEEGVDASTYMA.

The Q motif motif lies at 60 to 88 (TGFRDFLLKPELLRAITDCGFEHPSEVQQ). Residues 91 to 266 (IPTAILKVDV…KKFMRNPLEV (176 aa)) enclose the Helicase ATP-binding domain. Residue 104–111 (AKSGLGKT) participates in ATP binding. A DEAD box motif is present at residues 213 to 216 (DECD). The region spanning 294 to 439 (KLNELLDNLE…EYPEEGVDAS (146 aa)) is the Helicase C-terminal domain.

Belongs to the DEAD box helicase family. DECD subfamily.

It localises to the nucleus. The enzyme catalyses ATP + H2O = ADP + phosphate + H(+). ATP-binding RNA helicase involved in transcription elongation and required for the export of mRNA out of the nucleus. SUB2 also plays a role in pre-mRNA splicing and spliceosome assembly. May be involved in rDNA and telomeric silencing, and maintenance of genome integrity. This Coccidioides immitis (strain RS) (Valley fever fungus) protein is ATP-dependent RNA helicase SUB2 (SUB2).